The chain runs to 303 residues: Taste receptor type 2 member 13 (303 aa).

Over 1 to 7 (MESALPS) the chain is Extracellular. A helical membrane pass occupies residues 8–28 (ILTLVIIAEFIIGNLSNGFIV). Residues 29 to 55 (LINYIDWVSKRELSSVDKLLIILAISR) are Cytoplasmic-facing. A helical transmembrane segment spans residues 56-76 (IGLIWEILVSWFLALHYLAIF). The Extracellular segment spans residues 77 to 85 (VSGTGLRIM). Residues 86 to 106 (IFSWIVSNHFSLWLATILSIF) traverse the membrane as a helical segment. Over 107-128 (YLLKIASFSSPAFLYLKWRVNK) the chain is Cytoplasmic. Residues 129-149 (VILMILLGSLVFLFLNLIQIN) traverse the membrane as a helical segment. Topologically, residues 150–184 (IHIKDWLDRYEGNTTWNFSMSDFVTFSVSVKFTMT) are extracellular. Asn-162 and Asn-166 each carry an N-linked (GlcNAc...) asparagine glycan. The chain crosses the membrane as a helical span at residues 185–205 (MFSLTPFTVALISFSLLIFSL). Topologically, residues 206-232 (QKHLQKMQLNYKGHREPRTKVHTNALK) are cytoplasmic. The helical transmembrane segment at 233 to 253 (IVISFLLLYASFFLCILISWI) threads the bilayer. The Extracellular segment spans residues 254-261 (SELYQNTA). A helical membrane pass occupies residues 262–282 (IYMLCETIGLFYPSSHSFLLI). At 283-303 (LGNPKLRQAFLLVAAKVWAKR) the chain is on the cytoplasmic side.

The protein belongs to the G-protein coupled receptor T2R family.

The protein resides in the membrane. Its function is as follows. Receptor that may play a role in the perception of bitterness and is gustducin-linked. May play a role in sensing the chemical composition of the gastrointestinal content. The activity of this receptor may stimulate alpha gustducin, mediate PLC-beta-2 activation and lead to the gating of TRPM5. The polypeptide is Taste receptor type 2 member 13 (TAS2R13) (Pongo pygmaeus (Bornean orangutan)).